The chain runs to 295 residues: Putative S-adenosyl-L-methionine-dependent methyltransferase Mvan_0910 (295 aa).

S-adenosyl-L-methionine contacts are provided by residues Asp126 and 155-156 (DL).

This sequence belongs to the UPF0677 family.

Exhibits S-adenosyl-L-methionine-dependent methyltransferase activity. The chain is Putative S-adenosyl-L-methionine-dependent methyltransferase Mvan_0910 from Mycolicibacterium vanbaalenii (strain DSM 7251 / JCM 13017 / BCRC 16820 / KCTC 9966 / NRRL B-24157 / PYR-1) (Mycobacterium vanbaalenii).